The chain runs to 467 residues: Constitutive acid phosphatase (467 aa).

The N-terminal stretch at 1–17 is a signal peptide; that stretch reads MFKSVVYSVLAAALVNA. The active-site Nucleophile is histidine 75. N-linked (GlcNAc...) asparagine glycosylation is found at asparagine 97, asparagine 103, asparagine 162, asparagine 192, asparagine 250, and asparagine 315. The Proton donor role is filled by aspartate 338. Residues asparagine 356, asparagine 390, asparagine 439, asparagine 445, asparagine 456, and asparagine 461 are each glycosylated (N-linked (GlcNAc...) asparagine).

This sequence belongs to the histidine acid phosphatase family.

The enzyme catalyses a phosphate monoester + H2O = an alcohol + phosphate. The polypeptide is Constitutive acid phosphatase (PHO3) (Saccharomyces cerevisiae (strain ATCC 204508 / S288c) (Baker's yeast)).